The chain runs to 76 residues: Omega-conotoxin-like TxO2 (76 aa).

The first 22 residues, 1–22, serve as a signal peptide directing secretion; it reads MKLTCVVIVAVLFLTAWTFVTA. Positions 23–52 are excised as a propeptide; the sequence is APHSSNALENLYLKAHHEMNNPEDSELNKR. Cystine bridges form between Cys53-Cys67, Cys60-Cys71, and Cys66-Cys75.

This sequence belongs to the conotoxin O1 superfamily. As to expression, expressed by the venom duct.

Its subcellular location is the secreted. In terms of biological role, omega-conotoxins act at presynaptic membranes, they bind and block voltage-gated calcium channels (Cav). This Conus textile (Cloth-of-gold cone) protein is Omega-conotoxin-like TxO2.